Here is a 367-residue protein sequence, read N- to C-terminus: MFNVRQLIATTLLLSCAFAAQAERLKDIASISGVRSNQLIGYGLVVGLNGTGDQTTQTPFTLQTFNNMLSQFGIKVPAGSGNVQLKNVAAVSVHADLPPFAKPGQVVDITVSSIGNSKSLRGGSLLMTPLKGIDGNVYAIAQGNLVVGGFDAQGRDGSKITVNVPSAGRIPGGASVERAVPSGFNQGNTLTLNLNRPDFTTAKRIVDKVNDLLGPGVAQAVHGGSVRVSAPMDPSQRVDYLSILENLEIDPGQAVAKVIINSRTGTIVIGQNVKVSPAVTHGSLTVTITEDPIVSQPGAFSNGQTAVVPRSRVNAEQEAKPMFKFGPGTTLDEIVRAVNQVGAAPGNLMAILEALKHRPLQADLIVI.

The N-terminal stretch at 1–22 is a signal peptide; it reads MFNVRQLIATTLLLSCAFAAQA.

The protein belongs to the FlgI family. As to quaternary structure, the basal body constitutes a major portion of the flagellar organelle and consists of four rings (L,P,S, and M) mounted on a central rod.

The protein localises to the periplasm. Its subcellular location is the bacterial flagellum basal body. In terms of biological role, assembles around the rod to form the L-ring and probably protects the motor/basal body from shearing forces during rotation. The polypeptide is Flagellar P-ring protein (flgI) (Pseudomonas putida (Arthrobacter siderocapsulatus)).